Reading from the N-terminus, the 298-residue chain is 4-hydroxy-tetrahydrodipicolinate synthase (298 aa).

Thr45 lines the pyruvate pocket. Tyr133 functions as the Proton donor/acceptor in the catalytic mechanism. Catalysis depends on Lys161, which acts as the Schiff-base intermediate with substrate. Ile203 provides a ligand contact to pyruvate.

This sequence belongs to the DapA family. In terms of assembly, homotetramer; dimer of dimers.

The protein localises to the cytoplasm. It catalyses the reaction L-aspartate 4-semialdehyde + pyruvate = (2S,4S)-4-hydroxy-2,3,4,5-tetrahydrodipicolinate + H2O + H(+). The protein operates within amino-acid biosynthesis; L-lysine biosynthesis via DAP pathway; (S)-tetrahydrodipicolinate from L-aspartate: step 3/4. Functionally, catalyzes the condensation of (S)-aspartate-beta-semialdehyde [(S)-ASA] and pyruvate to 4-hydroxy-tetrahydrodipicolinate (HTPA). The protein is 4-hydroxy-tetrahydrodipicolinate synthase of Wigglesworthia glossinidia brevipalpis.